The chain runs to 1333 residues: ABC transporter ATP-binding protein/permease PDR18 (1333 aa).

The chain crosses the membrane as a helical span at residues Phe13–Ile33. The ABC transporter 1 domain maps to Ile30–Pro281. 4 N-linked (GlcNAc...) asparagine glycosylation sites follow: Asn48, Asn144, Asn205, and Asn350. 6 helical membrane passes run Tyr392–Tyr412, Ser425–Phe445, Phe474–Leu494, Gly499–Phe519, Ser534–Pro554, and Phe642–Tyr662. N-linked (GlcNAc...) asparagine glycosylation is found at Asn697 and Asn733. The ABC transporter 2 domain occupies Phe729–Ala971. Gly765–Thr772 lines the ATP pocket. An N-linked (GlcNAc...) asparagine glycan is attached at Asn958. 6 consecutive transmembrane segments (helical) span residues Leu1071 to Ile1091, Gly1092 to Asn1112, Pro1150 to Phe1170, Val1178 to Ile1198, Val1210 to Ser1230, and Phe1235 to Leu1255. N-linked (GlcNAc...) asparagine glycosylation is present at Asn1320.

Belongs to the ABC transporter superfamily. ABCG family. PDR (TC 3.A.1.205) subfamily.

Its subcellular location is the membrane. This chain is ABC transporter ATP-binding protein/permease PDR18 (PDR18), found in Saccharomyces cerevisiae (strain ATCC 204508 / S288c) (Baker's yeast).